Reading from the N-terminus, the 244-residue chain is Phosphoadenosine 5'-phosphosulfate reductase (244 aa).

Cysteine 239 acts as the Nucleophile; cysteine thiosulfonate intermediate in catalysis.

The protein belongs to the PAPS reductase family. CysH subfamily.

Its subcellular location is the cytoplasm. It catalyses the reaction [thioredoxin]-disulfide + sulfite + adenosine 3',5'-bisphosphate + 2 H(+) = [thioredoxin]-dithiol + 3'-phosphoadenylyl sulfate. Its pathway is sulfur metabolism; hydrogen sulfide biosynthesis; sulfite from sulfate: step 3/3. Catalyzes the formation of sulfite from phosphoadenosine 5'-phosphosulfate (PAPS) using thioredoxin as an electron donor. The chain is Phosphoadenosine 5'-phosphosulfate reductase from Citrobacter koseri (strain ATCC BAA-895 / CDC 4225-83 / SGSC4696).